We begin with the raw amino-acid sequence, 298 residues long: Glutamyl-Q tRNA(Asp) synthetase (298 aa).

Residues 8–12 (RFAPS) and E44 each bind L-glutamate. The 'HIGH' region motif lies at 11–21 (PSPTGPLHFGS). Zn(2+) contacts are provided by C100, C102, Y123, and C127. Positions 183 and 201 each coordinate L-glutamate. The 'KMSKS' region signature appears at 239 to 243 (KLSKQ). Residue K242 participates in ATP binding.

This sequence belongs to the class-I aminoacyl-tRNA synthetase family. GluQ subfamily. Zn(2+) is required as a cofactor.

Catalyzes the tRNA-independent activation of glutamate in presence of ATP and the subsequent transfer of glutamate onto a tRNA(Asp). Glutamate is transferred on the 2-amino-5-(4,5-dihydroxy-2-cyclopenten-1-yl) moiety of the queuosine in the wobble position of the QUC anticodon. This chain is Glutamyl-Q tRNA(Asp) synthetase, found in Burkholderia orbicola (strain MC0-3).